The chain runs to 462 residues: Siroheme synthase (462 aa).

Residues 1-203 (MQYFPIFVDT…GNNSKAEQMM (203 aa)) form a precorrin-2 dehydrogenase /sirohydrochlorin ferrochelatase region. NAD(+) is bound by residues 22 to 23 (EV) and 43 to 44 (PW). At Ser-128 the chain carries Phosphoserine. The uroporphyrinogen-III C-methyltransferase stretch occupies residues 217–462 (GEVYLVGAGP…EKLNWFGADA (246 aa)). Residue Pro-226 participates in S-adenosyl-L-methionine binding. Catalysis depends on Asp-249, which acts as the Proton acceptor. Residue Lys-271 is the Proton donor of the active site. S-adenosyl-L-methionine contacts are provided by residues 302-304 (GGD), Ile-307, 332-333 (TA), Met-384, and Ala-413.

In the N-terminal section; belongs to the precorrin-2 dehydrogenase / sirohydrochlorin ferrochelatase family. This sequence in the C-terminal section; belongs to the precorrin methyltransferase family.

The catalysed reaction is uroporphyrinogen III + 2 S-adenosyl-L-methionine = precorrin-2 + 2 S-adenosyl-L-homocysteine + H(+). It carries out the reaction precorrin-2 + NAD(+) = sirohydrochlorin + NADH + 2 H(+). The enzyme catalyses siroheme + 2 H(+) = sirohydrochlorin + Fe(2+). It participates in cofactor biosynthesis; adenosylcobalamin biosynthesis; precorrin-2 from uroporphyrinogen III: step 1/1. It functions in the pathway cofactor biosynthesis; adenosylcobalamin biosynthesis; sirohydrochlorin from precorrin-2: step 1/1. Its pathway is porphyrin-containing compound metabolism; siroheme biosynthesis; precorrin-2 from uroporphyrinogen III: step 1/1. The protein operates within porphyrin-containing compound metabolism; siroheme biosynthesis; siroheme from sirohydrochlorin: step 1/1. It participates in porphyrin-containing compound metabolism; siroheme biosynthesis; sirohydrochlorin from precorrin-2: step 1/1. Functionally, multifunctional enzyme that catalyzes the SAM-dependent methylations of uroporphyrinogen III at position C-2 and C-7 to form precorrin-2 via precorrin-1. Then it catalyzes the NAD-dependent ring dehydrogenation of precorrin-2 to yield sirohydrochlorin. Finally, it catalyzes the ferrochelation of sirohydrochlorin to yield siroheme. This Pseudoalteromonas atlantica (strain T6c / ATCC BAA-1087) protein is Siroheme synthase.